Reading from the N-terminus, the 333-residue chain is Delta(9)-fatty-acid desaturase fat-5 (333 aa).

4 helical membrane passes run 42-62, 66-86, 187-207, and 210-230; these read NVAL…QLVF, WATV…VTGG, LPLV…VLWG, and AFIA…HATW.

This sequence belongs to the fatty acid desaturase type 1 family. As to expression, expressed in the intestine in adult worms and in all four larval stages. Additional expression in the pharynx and tail cells after hatching and throughout the lifespan.

It localises to the membrane. The enzyme catalyses hexadecanoyl-CoA + 2 Fe(II)-[cytochrome b5] + O2 + 2 H(+) = (9Z)-hexadecenoyl-CoA + 2 Fe(III)-[cytochrome b5] + 2 H2O. It carries out the reaction tetradecanoyl-CoA + 2 Fe(II)-[cytochrome b5] + O2 + 2 H(+) = (9Z)-tetradecenoyl-CoA + 2 Fe(III)-[cytochrome b5] + 2 H2O. The catalysed reaction is heptadecanoyl-CoA + 2 Fe(II)-[cytochrome b5] + O2 + 2 H(+) = (9Z)-heptadecenoyl-CoA + 2 Fe(III)-[cytochrome b5] + 2 H2O. It catalyses the reaction pentadecanoyl-CoA + 2 Fe(II)-[cytochrome b5] + O2 + 2 H(+) = (9Z)-pentadecenoyl-CoA + 2 Fe(III)-[cytochrome b5] + 2 H2O. It participates in lipid metabolism; monounsaturated fatty acid biosynthesis. Delta(9)-fatty acid desaturase that acts preferentially on palmitoyl-CoA (hexadecanoyl-CoA) producing the monounsaturated palmitoleoyl-CoA ((9Z)-hexadecenoyl-CoA), which can be elongated to (11Z)-octadecenoyl-CoA (the most abundant monounsaturated fatty acid in Caenorhabditis elegans phospholipids and triacylglycerols). Also acts on pentadecanoyl-CoA, heptadecanoyl-CoA and myristoyl-CoA (tetradecanoyl-CoA), the monounsaturated fatty acids (MUFAs) produced are further used as substrates to synthesize polyunsaturated fatty acids (PUFAs) by several other desaturases and elongases. Unlike plants, Caenorhabditis elegans desaturases seem to use fatty acyl-CoAs as substrates. The polypeptide is Delta(9)-fatty-acid desaturase fat-5 (fat-5) (Caenorhabditis elegans).